Here is a 232-residue protein sequence, read N- to C-terminus: tRNA (guanine-N(7)-)-methyltransferase (232 aa).

4 residues coordinate S-adenosyl-L-methionine: Glu-63, Glu-88, Asp-115, and Asp-137. The active site involves Asp-137. Substrate is bound by residues Lys-141, Asp-173, and 211–214 (TRYE).

It belongs to the class I-like SAM-binding methyltransferase superfamily. TrmB family.

The enzyme catalyses guanosine(46) in tRNA + S-adenosyl-L-methionine = N(7)-methylguanosine(46) in tRNA + S-adenosyl-L-homocysteine. It functions in the pathway tRNA modification; N(7)-methylguanine-tRNA biosynthesis. Its function is as follows. Catalyzes the formation of N(7)-methylguanine at position 46 (m7G46) in tRNA. The chain is tRNA (guanine-N(7)-)-methyltransferase from Chelativorans sp. (strain BNC1).